A 679-amino-acid polypeptide reads, in one-letter code: DNA ligase (679 aa).

NAD(+) is bound by residues 32-36, 81-82, and Glu-115; these read DTLYD and SL. The N6-AMP-lysine intermediate role is filled by Lys-117. NAD(+)-binding residues include Arg-138, Glu-175, Lys-293, and Lys-317. Residues Cys-411, Cys-414, Cys-429, and Cys-434 each contribute to the Zn(2+) site. The region spanning 601–679 is the BRCT domain; that stretch reads NSSGALLGKT…EAELQKLLST (79 aa).

It belongs to the NAD-dependent DNA ligase family. LigA subfamily. Mg(2+) is required as a cofactor. It depends on Mn(2+) as a cofactor.

The enzyme catalyses NAD(+) + (deoxyribonucleotide)n-3'-hydroxyl + 5'-phospho-(deoxyribonucleotide)m = (deoxyribonucleotide)n+m + AMP + beta-nicotinamide D-nucleotide.. In terms of biological role, DNA ligase that catalyzes the formation of phosphodiester linkages between 5'-phosphoryl and 3'-hydroxyl groups in double-stranded DNA using NAD as a coenzyme and as the energy source for the reaction. It is essential for DNA replication and repair of damaged DNA. This Parasynechococcus marenigrum (strain WH8102) protein is DNA ligase.